The following is an 81-amino-acid chain: Large ribosomal subunit protein bL28 (81 aa).

Belongs to the bacterial ribosomal protein bL28 family.

The polypeptide is Large ribosomal subunit protein bL28 (Gloeobacter violaceus (strain ATCC 29082 / PCC 7421)).